A 348-amino-acid chain; its full sequence is Dihydroorotase (348 aa).

Positions 17 and 19 each coordinate Zn(2+). Residues His-19 to Arg-21 and Asn-45 contribute to the substrate site. The Zn(2+) site is built by Lys-103, His-140, and His-178. Lys-103 is subject to N6-carboxylysine. His-140 is a binding site for substrate. Residue Leu-223 participates in substrate binding. Asp-251 is a binding site for Zn(2+). Asp-251 is an active-site residue. Substrate contacts are provided by His-255 and Ala-267.

It belongs to the metallo-dependent hydrolases superfamily. DHOase family. Class II DHOase subfamily. As to quaternary structure, homodimer. It depends on Zn(2+) as a cofactor.

It catalyses the reaction (S)-dihydroorotate + H2O = N-carbamoyl-L-aspartate + H(+). The protein operates within pyrimidine metabolism; UMP biosynthesis via de novo pathway; (S)-dihydroorotate from bicarbonate: step 3/3. Its function is as follows. Catalyzes the reversible cyclization of carbamoyl aspartate to dihydroorotate. The protein is Dihydroorotase of Escherichia coli (strain SMS-3-5 / SECEC).